The chain runs to 352 residues: Desmethylxanthohumol 6'-O-methyltransferase (352 aa).

Residue Asp219 coordinates S-adenosyl-L-methionine. His257 functions as the Proton acceptor in the catalytic mechanism.

This sequence belongs to the class I-like SAM-binding methyltransferase superfamily. Cation-independent O-methyltransferase family. As to quaternary structure, homodimer. In terms of tissue distribution, highly expressed in lupulin glands. Detected in early-, mid- and late-stage cones.

It is found in the cytoplasm. The enzyme catalyses desmethylxanthohumol + S-adenosyl-L-methionine = xanthohumol + S-adenosyl-L-homocysteine + H(+). The catalysed reaction is xanthogalenol + S-adenosyl-L-methionine = 4'-O-methylxanthohumol + S-adenosyl-L-homocysteine + H(+). Its pathway is secondary metabolite biosynthesis. Its activity is regulated as follows. Inhibited by S-adenosyl homocysteine. Its function is as follows. Involved in the biosynthesis of prenylated phenolics natural products which contribute to the bitter taste of beer and display broad biological activities. Catalyzes the biosynthesis of xanthohumol. Methylates desmethylxanthohumol and xanthogalenol, but not caffeic acid, prenylflavanones, simple phenols or phenylpropanoids. The chain is Desmethylxanthohumol 6'-O-methyltransferase from Humulus lupulus (European hop).